The primary structure comprises 174 residues: Balbiani ring protein 1 (174 aa).

The segment at 28–174 is disordered; sequence KCRCTSAGKP…RPEGCGSAMR (147 aa). A run of 8 repeats spans residues 42–52, 53–63, 64–74, 75–85, 124–134, 135–145, 146–156, and 157–167. 4 X 11 AA tandem repeats stretches follow at residues 42 to 85 and 124 to 167; these read EPSK…PRPE. 2 stretches are compositionally biased toward basic and acidic residues: residues 49-100 and 121-159; these read PRPE…EKCA and RKSEPSKGSKPRPEKPSKESKPRPEKPSKGSKPRPEKPS.

As to expression, salivary gland.

Its subcellular location is the secreted. Its function is as follows. Used by the larvae to construct a supramolecular structure, the larval tube. The protein is Balbiani ring protein 1 (BR1) of Chironomus tentans (Midge).